The following is a 158-amino-acid chain: NAD(P)H-quinone oxidoreductase subunit J, chloroplastic (158 aa).

Belongs to the complex I 30 kDa subunit family. NDH is composed of at least 16 different subunits, 5 of which are encoded in the nucleus.

It localises to the plastid. It is found in the chloroplast thylakoid membrane. It carries out the reaction a plastoquinone + NADH + (n+1) H(+)(in) = a plastoquinol + NAD(+) + n H(+)(out). The enzyme catalyses a plastoquinone + NADPH + (n+1) H(+)(in) = a plastoquinol + NADP(+) + n H(+)(out). In terms of biological role, NDH shuttles electrons from NAD(P)H:plastoquinone, via FMN and iron-sulfur (Fe-S) centers, to quinones in the photosynthetic chain and possibly in a chloroplast respiratory chain. The immediate electron acceptor for the enzyme in this species is believed to be plastoquinone. Couples the redox reaction to proton translocation, and thus conserves the redox energy in a proton gradient. The sequence is that of NAD(P)H-quinone oxidoreductase subunit J, chloroplastic from Amborella trichopoda.